Consider the following 344-residue polypeptide: Holliday junction branch migration complex subunit RuvB (344 aa).

Positions 1–182 are large ATPase domain (RuvB-L); it reads MRIELLNTPV…FGISNRFDYY (182 aa). Residues Ile-21, Arg-22, Gly-63, Lys-66, Thr-67, Thr-68, 129-131, Arg-172, Tyr-182, and Arg-219 contribute to the ATP site; that span reads EDF. Mg(2+) is bound at residue Thr-67. Positions 183–253 are small ATPAse domain (RuvB-S); that stretch reads PPELLETILM…TAMKTLDSLE (71 aa). Positions 256 to 344 are head domain (RuvB-H); sequence EEGLDEMDKK…GTLFDGQEHV (89 aa). Arg-311 and Arg-316 together coordinate DNA.

Belongs to the RuvB family. Homohexamer. Forms an RuvA(8)-RuvB(12)-Holliday junction (HJ) complex. HJ DNA is sandwiched between 2 RuvA tetramers; dsDNA enters through RuvA and exits via RuvB. An RuvB hexamer assembles on each DNA strand where it exits the tetramer. Each RuvB hexamer is contacted by two RuvA subunits (via domain III) on 2 adjacent RuvB subunits; this complex drives branch migration. In the full resolvosome a probable DNA-RuvA(4)-RuvB(12)-RuvC(2) complex forms which resolves the HJ.

The protein resides in the cytoplasm. It carries out the reaction ATP + H2O = ADP + phosphate + H(+). In terms of biological role, the RuvA-RuvB-RuvC complex processes Holliday junction (HJ) DNA during genetic recombination and DNA repair, while the RuvA-RuvB complex plays an important role in the rescue of blocked DNA replication forks via replication fork reversal (RFR). RuvA specifically binds to HJ cruciform DNA, conferring on it an open structure. The RuvB hexamer acts as an ATP-dependent pump, pulling dsDNA into and through the RuvAB complex. RuvB forms 2 homohexamers on either side of HJ DNA bound by 1 or 2 RuvA tetramers; 4 subunits per hexamer contact DNA at a time. Coordinated motions by a converter formed by DNA-disengaged RuvB subunits stimulates ATP hydrolysis and nucleotide exchange. Immobilization of the converter enables RuvB to convert the ATP-contained energy into a lever motion, pulling 2 nucleotides of DNA out of the RuvA tetramer per ATP hydrolyzed, thus driving DNA branch migration. The RuvB motors rotate together with the DNA substrate, which together with the progressing nucleotide cycle form the mechanistic basis for DNA recombination by continuous HJ branch migration. Branch migration allows RuvC to scan DNA until it finds its consensus sequence, where it cleaves and resolves cruciform DNA. The protein is Holliday junction branch migration complex subunit RuvB of Chlorobium luteolum (strain DSM 273 / BCRC 81028 / 2530) (Pelodictyon luteolum).